Consider the following 152-residue polypeptide: Bacchus (152 aa).

Over residues 29–41 (DLKAKAAAEDKAA) the composition is skewed to basic and acidic residues. The interval 29–152 (DLKAKAAAED…DDGSGSDDQA (124 aa)) is disordered. The segment covering 42 to 51 (AADAAGDAAD) has biased composition (low complexity). The segment covering 72–89 (ESVKGTKRPAEAKSAESK) has biased composition (basic and acidic residues). Positions 99–152 (GDSDEEEALEEIIEGDSEIESDEYDIPYDGEEDDIECDDDDDDNDDGSGSDDQA) are enriched in acidic residues.

As to expression, expressed in the brain.

It localises to the nucleus. Functionally, negatively regulates tyramine beta-hydroxylase tbh and thus the conversion of tyramine (TA) to octopamine (OA). In tyrosine decarboxylase 2 (Tdc2) neurons, acts in an amine-mediated signaling pathway to negatively regulate acute ethanol sensitivity probably via tbh-mediated depletion of TA. The protein is Bacchus of Drosophila melanogaster (Fruit fly).